Consider the following 161-residue polypeptide: Putative outer membrane protein YedS (161 aa).

A signal peptide spans 1–21; it reads MKRKVLAMLVPALLVAGAANA.

It belongs to the Gram-negative porin family.

The protein localises to the cell outer membrane. The protein is Putative outer membrane protein YedS (yedS) of Escherichia coli (strain K12).